The chain runs to 102 residues: Small ribosomal subunit protein uS10 (102 aa).

Belongs to the universal ribosomal protein uS10 family. In terms of assembly, part of the 30S ribosomal subunit.

Involved in the binding of tRNA to the ribosomes. The polypeptide is Small ribosomal subunit protein uS10 (Methanoregula boonei (strain DSM 21154 / JCM 14090 / 6A8)).